Here is a 138-residue protein sequence, read N- to C-terminus: Large ribosomal subunit protein uL16 (138 aa).

Basic residues predominate over residues 1–13; it reads MLQPKRRKYRKEQ. The tract at residues 1 to 24 is disordered; the sequence is MLQPKRRKYRKEQKGRNTGKATRG.

Belongs to the universal ribosomal protein uL16 family. Part of the 50S ribosomal subunit.

In terms of biological role, binds 23S rRNA and is also seen to make contacts with the A and possibly P site tRNAs. The protein is Large ribosomal subunit protein uL16 of Burkholderia ambifaria (strain ATCC BAA-244 / DSM 16087 / CCUG 44356 / LMG 19182 / AMMD) (Burkholderia cepacia (strain AMMD)).